The sequence spans 542 residues: uncharacterized protein (542 aa).

5 consecutive transmembrane segments (helical) span residues 4-23 (ILRDNPLLLLFIVAGIGYPL), 28-47 (IGGIHLGVAAVLFVGLAFGA), 57-79 (IVYQFGLALFVYCVGLSSGHGFL), 86-108 (GVIYNLLTLGVILLAAALLLIPH), and 151-173 (PVVGYSIAYPASVLGVILAIYLA). RCK C-terminal domains follow at residues 186–270 (RTLK…VIGC) and 273–356 (EVQA…LGDS). Helical transmembrane passes span 365–384 (IAVLGLGMALGIGLGLVPIP), 389–408 (ITVRLGLAGGPLIVALFLGA), 415–437 (LVWVLPYSANMLLRQMGLTIFLA), 457–479 (WAILGASAAIIVLLSWVMLYVGY), 484–506 (IPMGLLTGMVAGMQTQSATLGFA), and 519–541 (YAMVYPMAMVVKIVLAPVIIAVL).

This sequence belongs to the AAE transporter (TC 2.A.81) family.

The protein resides in the cell membrane. This is an uncharacterized protein from Symbiobacterium thermophilum (strain DSM 24528 / JCM 14929 / IAM 14863 / T).